Reading from the N-terminus, the 571-residue chain is Urease subunit alpha (571 aa).

The Urease domain occupies 134–571; the sequence is GAIDTHIHFI…LPMAQRYFLF (438 aa). Positions 139, 141, and 222 each coordinate Ni(2+). At K222 the chain carries N6-carboxylysine. H224 is a substrate binding site. The Ni(2+) site is built by H251 and H277. H325 serves as the catalytic Proton donor. A Ni(2+)-binding site is contributed by D365.

It belongs to the metallo-dependent hydrolases superfamily. Urease alpha subunit family. In terms of assembly, heterotrimer of UreA (gamma), UreB (beta) and UreC (alpha) subunits. Three heterotrimers associate to form the active enzyme. It depends on Ni cation as a cofactor. In terms of processing, carboxylation allows a single lysine to coordinate two nickel ions.

Its subcellular location is the cytoplasm. The enzyme catalyses urea + 2 H2O + H(+) = hydrogencarbonate + 2 NH4(+). The protein operates within nitrogen metabolism; urea degradation; CO(2) and NH(3) from urea (urease route): step 1/1. The chain is Urease subunit alpha from Bordetella bronchiseptica (strain ATCC BAA-588 / NCTC 13252 / RB50) (Alcaligenes bronchisepticus).